The following is a 188-amino-acid chain: MNMEEQILNDYLLSQGRLQSIISLEQWRQLFPQRYREDPLIERLYEYCTQQRQKRLAKLRANIHLESQVIGKSRIDRMLATNVEKLQTVSHASTLHDVEEFYTSHSAKPLDISEINERLSEAVQSAYTKLNEEKERCTQLTLKMNSQIASLSDFQWSKEPNVDESIHLVESLIESLEKAAPSAIEELD.

It belongs to the NKP2 family. Component of the inner kinetochore constitutive centromere-associated network (CCAN) (also known as central kinetochore Sim4 complex in fission yeast), which is composed of at least cnl2, cnp3, cnp20, fta1, fta2, fta3, fta4, fta6, fta7, mal2, mhf1, mhf2, mis6, mis15, mis17, sim4 and wip1.

It is found in the cytoplasm. The protein localises to the nucleus. Its subcellular location is the chromosome. The protein resides in the centromere. It localises to the kinetochore. Functionally, component of the kinetochore, a multiprotein complex that assembles on centromeric DNA and attaches chromosomes to spindle microtubules, mediating chromosome segregation and sister chromatid segregation during meiosis and mitosis. Component of the inner kinetochore constitutive centromere-associated network (CCAN), which serves as a structural platform for outer kinetochore assembly. This chain is Inner kinetochore subunit cnl2 (cnl2), found in Schizosaccharomyces pombe (strain 972 / ATCC 24843) (Fission yeast).